Consider the following 946-residue polypeptide: MQRPVCLLIWLFLLEAQAFEIPINGNSEFAEYSDLVELAPDKLPFVQENGRHQRSLPEESGEETDTVDPVTLYSYKVQSTITSRVATTTIQSKLVNNSPLPQSVVFDVQIPKGAFISNFTMTVNGMTFTSSIKEKTVGRALYSQARAKGKTAGWVRSRTLDMENFNTEVNIPPGAKVQFELHYQEVKWRKLGSYEHKIHLQPGKLAKHLEVNVWIIEPQGMRFLHVPDTFEGHFQGVPVISKGQQKAHVSFKPTVAQQRKCPNCTETAVNGELVVMYDVNREEKAGELEVFNGYFVHFFAPENLDPIPKNILFVIDVSGSMWGIKMKQTVEAMKTILDDLRTDDQFSVVDFNHNVRTWRNDLVSATKTQIADAKRYIEKIQPSGGTNINEALLRAIFILNEASNMGLLNPDSVSLIILVSDGDPTVGELKLSKIQKNVKQSIQDNISLFSLGIGFDVDYDFLKRLSNENRGIAQRIYGNQDTSSQLKKFYNQVSTPLLRNVQFNYPQASVTDVTQNNFHNYFGGSEIVVAGKFDPSKLTEVQSIITATSANTELVLETLSQMDDLEEFLSKDKHADPDFTKKLWAYLTINQLLAERSLAPTAAIKRKITKTILQMSLDHHIVTPLTAMVIENDAGDERMLADSPPQDHSCCSGALYYGTKVASGPIPSWANPSPTPMSAMLAVGAKPLESTPPTHLNQVENDPHFIIYLPKSKRNICFNIDSEPGKILSLVSDPESGIVVNGQLIGAKRAENGKLSTYFGKLGFYFQKEGMKIEISTETITLSSGSSTSRLSWSDTAHLGNSRVLISVKKEKSVTLTLNKELFFSVLLHRVWRKHPVNVDFLGIYAPPIDKFSPRVHGLLGQFMQEPAIHIFNERPGKEPGKPEASMEVKGHKLTVTRGLQKDYRTDIVFGTDVPCWFVHNSGKGFIDGHYKDYFVPQLYSFLKRP.

Residues 1-18 form the signal peptide; that stretch reads MQRPVCLLIWLFLLEAQA. The propeptide occupies 19 to 54; that stretch reads FEIPINGNSEFAEYSDLVELAPDKLPFVQENGRHQR. The region spanning 56–185 is the VIT domain; it reads LPEESGEETD…KVQFELHYQE (130 aa). Serine 60 carries the phosphoserine modification. Residues asparagine 118 and asparagine 263 are each glycosylated (N-linked (GlcNAc...) asparagine). A 4-carboxyglutamate mark is found at glutamate 282 and glutamate 283. Residues 308–468 form the VWFA domain; it reads PKNILFVIDV…YDFLKRLSNE (161 aa). Residue asparagine 445 is glycosylated (N-linked (GlcNAc...) asparagine). Serine 466 is subject to Phosphoserine. Aspartate 702 bears the Aspartate 1-(chondroitin 4-sulfate)-ester mark. Residues 703 to 946 constitute a propeptide that is removed on maturation; that stretch reads PHFIIYLPKS…PQLYSFLKRP (244 aa). Serine 886 is subject to Phosphoserine.

This sequence belongs to the ITIH family. I-alpha-I plasma protease inhibitors are assembled from one or two heavy chains (HC) and one light chain, bikunin. Inter-alpha-inhibitor (I-alpha-I) is composed of ITIH1/HC1, ITIH2/HC2 and bikunin. Heavy chains are linked to bikunin via chondroitin 4-sulfate esterified to the alpha-carboxyl of the C-terminal aspartate after propeptide cleavage. In terms of processing, phosphorylated by FAM20C in the extracellular medium. In terms of tissue distribution, expressed in both liver and brain.

It is found in the secreted. May act as a carrier of hyaluronan in serum or as a binding protein between hyaluronan and other matrix protein, including those on cell surfaces in tissues to regulate the localization, synthesis and degradation of hyaluronan which are essential to cells undergoing biological processes. This chain is Inter-alpha-trypsin inhibitor heavy chain H2 (Itih2), found in Mus musculus (Mouse).